The sequence spans 393 residues: Riboflavin biosynthesis protein RibBA (393 aa).

A DHBP synthase region spans residues 1–200; that stretch reads MQFDNIDSAL…IDDLIEYRKK (200 aa). D-ribulose 5-phosphate contacts are provided by residues 27–28, D32, 139–143, and E163; these read RE and RNGHT. E28 provides a ligand contact to Mg(2+). H142 contributes to the Mg(2+) binding site. The GTP cyclohydrolase II stretch occupies residues 201 to 393; it reads LEPEIEFKAK…TKKIKMGHLI (193 aa). 249-253 is a GTP binding site; sequence RLHSA. Residues C254, C265, and C267 each contribute to the Zn(2+) site. GTP is bound by residues Q270, 291 to 293, and T313; that span reads EGR. D325 functions as the Proton acceptor; for GTP cyclohydrolase activity in the catalytic mechanism. R327 functions as the Nucleophile; for GTP cyclohydrolase activity in the catalytic mechanism. GTP contacts are provided by S348 and K353.

This sequence in the N-terminal section; belongs to the DHBP synthase family. It in the C-terminal section; belongs to the GTP cyclohydrolase II family. The cofactor is Mg(2+). Mn(2+) is required as a cofactor. It depends on Zn(2+) as a cofactor.

The enzyme catalyses D-ribulose 5-phosphate = (2S)-2-hydroxy-3-oxobutyl phosphate + formate + H(+). It carries out the reaction GTP + 4 H2O = 2,5-diamino-6-hydroxy-4-(5-phosphoribosylamino)-pyrimidine + formate + 2 phosphate + 3 H(+). It participates in cofactor biosynthesis; riboflavin biosynthesis; 2-hydroxy-3-oxobutyl phosphate from D-ribulose 5-phosphate: step 1/1. The protein operates within cofactor biosynthesis; riboflavin biosynthesis; 5-amino-6-(D-ribitylamino)uracil from GTP: step 1/4. Its function is as follows. Catalyzes the conversion of D-ribulose 5-phosphate to formate and 3,4-dihydroxy-2-butanone 4-phosphate. Functionally, catalyzes the conversion of GTP to 2,5-diamino-6-ribosylamino-4(3H)-pyrimidinone 5'-phosphate (DARP), formate and pyrophosphate. The chain is Riboflavin biosynthesis protein RibBA from Staphylococcus aureus (strain MRSA252).